Reading from the N-terminus, the 720-residue chain is Iron-sulfur clusters transporter ATM1, mitochondrial (720 aa).

Residues 1–36 (MIMFRSLSVTPVWKAGLSLSHRSIPINSRLSSVRNY) constitute a mitochondrion transit peptide. The Mitochondrial matrix segment spans residues 37–129 (ISIGCANKTG…PSGDNKVKIR (93 aa)). A compositionally biased stretch (polar residues) spans 64-77 (RFNSSSNGNGTDKN). Residues 64–102 (RFNSSSNGNGTDKNASVAPKTEVKKIVPPKPSTNGKSKT) are disordered. A helical transmembrane segment spans residues 130 to 151 (VLIALALLIGAKLLNVQVPFFF). The region spanning 130–421 (VLIALALLIG…LGSVYRELKQ (292 aa)) is the ABC transmembrane type-1 domain. Over 152–175 (KQTIDSMNIEWGPDVATVLPVAIT) the chain is Mitochondrial intermembrane. Residues 176–199 (MTILSYGAARFGAVMFGELRNAVF) form a helical membrane-spanning segment. Topologically, residues 200–248 (AKVAQNAIRKVSLQTFQHLMKLDLGWHLSRQTGGLTRAMDRGTKGISYV) are mitochondrial matrix. A helical transmembrane segment spans residues 249 to 272 (LSAMVFHMIPITFEISVVCGILTY). A topological domain (mitochondrial intermembrane) is located at residue glutamine 273. A helical membrane pass occupies residues 274 to 294 (FGSSFAAMTFVTMLLYSFFTF). Over 295–360 (KTTAWRTEFR…SQIKVAQSLA (66 aa)) the chain is Mitochondrial matrix. Residues 300-304 (RTEFR) and 363-366 (NAGQ) each bind glutathione. The helical transmembrane segment at 361–379 (FLNAGQNFIFTSALTAMMY) threads the bilayer. The Mitochondrial intermembrane portion of the chain corresponds to 380–394 (MGASGVMEGALTVGD). A helical transmembrane segment spans residues 395 to 416 (LVLINQLVFQLSVPLNFLGSVY). Glycine 413 is a glutathione binding site. The Mitochondrial matrix portion of the chain corresponds to 417 to 720 (RELKQSLIDM…EKEPRTSKKD (304 aa)). Positions 456-692 (IKFENVTFGY…PNSLYSELWN (237 aa)) constitute an ABC transporter domain. ATP contacts are provided by residues tyrosine 465 and 489–500 (GPSGSGKSTILR).

This sequence belongs to the ABC transporter superfamily. ABCB family. Heavy Metal importer (TC 3.A.1.210) subfamily. As to quaternary structure, homodimer.

It localises to the mitochondrion inner membrane. Its function is as follows. Performs an essential function in the generation of cytoplasmic iron-sulfur proteins by mediating the ATP-dependent export of Fe/S cluster precursors synthesized by NFS1 and other mitochondrial proteins. Hydrolyzes ATP. Binds glutathione and may function by transporting a glutathione-conjugated iron-sulfur compound. This Kluyveromyces lactis (strain ATCC 8585 / CBS 2359 / DSM 70799 / NBRC 1267 / NRRL Y-1140 / WM37) (Yeast) protein is Iron-sulfur clusters transporter ATM1, mitochondrial.